Here is a 204-residue protein sequence, read N- to C-terminus: Peptide deformylase (204 aa).

Positions 131 and 174 each coordinate Fe cation. Glu-175 is a catalytic residue. His-178 provides a ligand contact to Fe cation.

It belongs to the polypeptide deformylase family. Requires Fe(2+) as cofactor.

The catalysed reaction is N-terminal N-formyl-L-methionyl-[peptide] + H2O = N-terminal L-methionyl-[peptide] + formate. Removes the formyl group from the N-terminal Met of newly synthesized proteins. Requires at least a dipeptide for an efficient rate of reaction. N-terminal L-methionine is a prerequisite for activity but the enzyme has broad specificity at other positions. The sequence is that of Peptide deformylase from Streptococcus thermophilus (strain CNRZ 1066).